The following is a 301-amino-acid chain: MKVGVIMGGISSEREISIQSGNSVVHALDKDKYEAIPIVLNEKEDLIEKVKGIDFALLALHGKFGEDGTVQSVLKTLGIPFSGCGPLSSAICMDKDMTKRILAFGNVRTARWEMVSSVDEIDYEKIENLGYPVFVKPNNGGSSVATTLVESKEAVKDAVLEALKYDTEVMIEEYIKGDEITCPIIDGKMLPVLAIKPKGKFFDIASKYGDGGADEFIVELNEDLHKEVEKMALETYKLLKCDVYARVDMLVKDNIPYVLEVNTLPGMTKNSLFPKSAAGINMSFEELLDTIIEKSLKVNRE.

Positions 99-293 (KRILAFGNVR…FEELLDTIIE (195 aa)) constitute an ATP-grasp domain. 126 to 181 (IENLGYPVFVKPNNGGSSVATTLVESKEAVKDAVLEALKYDTEVMIEEYIKGDEIT) contacts ATP. D248, E260, and N262 together coordinate Mg(2+).

The protein belongs to the D-alanine--D-alanine ligase family. It depends on Mg(2+) as a cofactor. The cofactor is Mn(2+).

It localises to the cytoplasm. The catalysed reaction is 2 D-alanine + ATP = D-alanyl-D-alanine + ADP + phosphate + H(+). Its pathway is cell wall biogenesis; peptidoglycan biosynthesis. In terms of biological role, cell wall formation. The polypeptide is D-alanine--D-alanine ligase A (Clostridium perfringens (strain 13 / Type A)).